A 298-amino-acid chain; its full sequence is Olfactory receptor 5AK3 (298 aa).

At 1–25 (MGRGNSTEVTEFHLLGFGVQHEFQH) the chain is on the extracellular side. Residue asparagine 5 is glycosylated (N-linked (GlcNAc...) asparagine). A helical membrane pass occupies residues 26–46 (VLFIVLLLIYVTSLIGNIGMI). Topologically, residues 47–54 (LLIKTDSR) are cytoplasmic. A helical transmembrane segment spans residues 55–75 (LQTPMYFFPQHLAFVDICYTS). The Extracellular portion of the chain corresponds to 76–99 (AITPKMLQSFTEENNLITFRGCVI). A disulfide bond links cysteine 97 and cysteine 189. A helical transmembrane segment spans residues 100 to 120 (QFLVYATFATSDCYLLAIMAM). The Cytoplasmic segment spans residues 121–133 (DCYVAICKPLRYP). Residues 134–154 (MIMSQTVYIQLVAGSYIIGSI) traverse the membrane as a helical segment. Residue asparagine 155 is glycosylated (N-linked (GlcNAc...) asparagine). Topologically, residues 155 to 196 (NASVHTGFTFSLSFCKSNKINHFFCDGLPILALSCSNIDINI) are extracellular. The chain crosses the membrane as a helical span at residues 197–217 (ILDVVFVGFDLMFTELVIIFS). At 218–237 (YIYIMVTILKMSSTAGRKKS) the chain is on the cytoplasmic side. A helical membrane pass occupies residues 238 to 258 (FSTCASHLTAVTIFYGTLSYM). Residues 259 to 271 (YLQPQSNNSQENM) are Extracellular-facing. Asparagine 265 carries an N-linked (GlcNAc...) asparagine glycan. Residues 272-292 (KVASIFYGTVIPMLNPLIYSL) form a helical membrane-spanning segment. The Cytoplasmic portion of the chain corresponds to 293–298 (RNKEGK).

It belongs to the G-protein coupled receptor 1 family.

The protein resides in the cell membrane. In terms of biological role, odorant receptor. The chain is Olfactory receptor 5AK3 (OR5AK3P) from Homo sapiens (Human).